The sequence spans 403 residues: Arginine biosynthesis bifunctional protein ArgJ (403 aa).

Over residues 1-11 (MVQSVLSSTSH) the composition is skewed to polar residues. The tract at residues 1–21 (MVQSVLSSTSHGSERADMSAA) is disordered. Residues Thr-161, Lys-183, Thr-194, Glu-273, Asn-398, and Thr-403 each coordinate substrate. Thr-194 (nucleophile) is an active-site residue.

The protein belongs to the ArgJ family. As to quaternary structure, heterotetramer of two alpha and two beta chains.

The protein resides in the cytoplasm. The enzyme catalyses N(2)-acetyl-L-ornithine + L-glutamate = N-acetyl-L-glutamate + L-ornithine. It catalyses the reaction L-glutamate + acetyl-CoA = N-acetyl-L-glutamate + CoA + H(+). It participates in amino-acid biosynthesis; L-arginine biosynthesis; L-ornithine and N-acetyl-L-glutamate from L-glutamate and N(2)-acetyl-L-ornithine (cyclic): step 1/1. Its pathway is amino-acid biosynthesis; L-arginine biosynthesis; N(2)-acetyl-L-ornithine from L-glutamate: step 1/4. Catalyzes two activities which are involved in the cyclic version of arginine biosynthesis: the synthesis of N-acetylglutamate from glutamate and acetyl-CoA as the acetyl donor, and of ornithine by transacetylation between N(2)-acetylornithine and glutamate. The chain is Arginine biosynthesis bifunctional protein ArgJ from Rhodococcoides fascians (Rhodococcus fascians).